Reading from the N-terminus, the 747-residue chain is Phenylalanine ammonia-lyase 2 (747 aa).

Positions 1–20 (MTILSGTTAAPRVNGTTMNG) are enriched in polar residues. Residues 1-47 (MTILSGTTAAPRVNGTTMNGHSKPHTNGVHLNGHAPKATTESPWPQS) are disordered. Catalysis depends on tyrosine 124, which acts as the Proton donor/acceptor. The segment at residues 229-231 (ASG) is a cross-link (5-imidazolinone (Ala-Gly)). At serine 230 the chain carries 2,3-didehydroalanine (Ser). (E)-cinnamate contacts are provided by asparagine 290, glutamine 380, arginine 386, asparagine 416, lysine 487, glutamate 515, and asparagine 518.

Belongs to the PAL/histidase family. In terms of assembly, homotetramer. Post-translationally, contains an active site 4-methylidene-imidazol-5-one (MIO), which is formed autocatalytically by cyclization and dehydration of residues Ala-Ser-Gly.

The protein resides in the cytoplasm. It carries out the reaction L-phenylalanine = (E)-cinnamate + NH4(+). Its pathway is phenylpropanoid metabolism; trans-cinnamate biosynthesis; trans-cinnamate from L-phenylalanine: step 1/1. Catalyzes the non-oxidative deamination of L-phenylalanine to form trans-cinnamic acid and a free ammonium ion. Facilitates the commitment step in phenylpropanoid pathways that produce secondary metabolites such as lignins, coumarins and flavonoids. The protein is Phenylalanine ammonia-lyase 2 of Pleurotus ostreatus (Oyster mushroom).